A 234-amino-acid polypeptide reads, in one-letter code: Triosephosphate isomerase (234 aa).

Asparagine 8–lysine 10 serves as a coordination point for substrate. The active-site Electrophile is the histidine 90. Glutamate 159 functions as the Proton acceptor in the catalytic mechanism. Substrate-binding residues include glycine 165 and serine 197.

This sequence belongs to the triosephosphate isomerase family. In terms of assembly, homodimer.

It localises to the cytoplasm. It catalyses the reaction D-glyceraldehyde 3-phosphate = dihydroxyacetone phosphate. It participates in carbohydrate biosynthesis; gluconeogenesis. It functions in the pathway carbohydrate degradation; glycolysis; D-glyceraldehyde 3-phosphate from glycerone phosphate: step 1/1. Functionally, involved in the gluconeogenesis. Catalyzes stereospecifically the conversion of dihydroxyacetone phosphate (DHAP) to D-glyceraldehyde-3-phosphate (G3P). This is Triosephosphate isomerase from Helicobacter pylori (strain P12).